The sequence spans 330 residues: Aspartate--ammonia ligase (330 aa).

It belongs to the class-II aminoacyl-tRNA synthetase family. AsnA subfamily.

It is found in the cytoplasm. It carries out the reaction L-aspartate + NH4(+) + ATP = L-asparagine + AMP + diphosphate + H(+). It functions in the pathway amino-acid biosynthesis; L-asparagine biosynthesis; L-asparagine from L-aspartate (ammonia route): step 1/1. This chain is Aspartate--ammonia ligase, found in Haemophilus influenzae (strain PittEE).